We begin with the raw amino-acid sequence, 57 residues long: Thiocillin GE37468 (57 aa).

The propeptide at 1 to 42 (MGNNEEYFIDVNDLSIDVFDVVEQGGAVTALTADHGMPEVGA) is removed in mature form. Residues 43-44 (ST) constitute a cross-link (5-methyloxazole-4-carboxylic acid (Ser-Thr)). The segment at residues 43 to 52 (STNCFCYICC) is a cross-link (pyridine-2,5-dicarboxylic acid (Ser-Cys) (with S-53)). Residues 43–53 (STNCFCYICCS) constitute a cross-link (pyridine-2,5-dicarboxylic acid (Ser-Ser) (with C-52)). The thiazole-4-carboxylic acid (Asn-Cys) cross-link spans 45 to 46 (NC). The thiazoline-4-carboxylic acid (Phe-Cys) cross-link spans 47–48 (FC). Ile-50 bears the 5-hydroxy-3-methylproline (Ile) mark. A cross-link (thiazole-4-carboxylic acid (Ile-Cys)) is located at residues 50-51 (IC). The thiazole-4-carboxylic acid (Cys-Cys) cross-link spans 51–52 (CC). Residues 53–54 (SC) constitute a cross-link (thiazole-4-carboxylic acid (Ser-Cys)). 2,3-didehydroalanine (Ser) occurs at positions 55 and 56. Position 57 (Asn-57) is a propeptide, removed in mature form.

In terms of processing, maturation of thiazole and oxazole containing antibiotics involves the enzymatic condensation of a Cys, Ser or Thr with the alpha-carbonyl of the preceding amino acid to form a thioether or ether bond, then dehydration to form a double bond with the alpha-amino nitrogen. Thiazoline or oxazoline ring are dehydrogenated to form thiazole or oxazole rings. Post-translationally, maturation of pyridinyl containing antibiotics involves the cross-linking of a Ser and a Cys-Ser pair usually separated by 7 or 8 residues along the peptide chain. The Ser residues are dehydrated to didehydroalanines, then bonded between their beta carbons. The alpha carbonyl of the Cys condenses with alpha carbon of the first Ser to form a pyridinyl ring. The ring may be multiply dehydrogenated to form a pyridine ring with loss of the amino nitrogen of the first Ser.

It localises to the secreted. In terms of biological role, has bacteriocidal activity against both aerobic and anaerobic Gram-positive bacteria. Inhibits growth of B.subtilis (MIC=0.047 ug/ml) and methicillin-resistant S.aureus (MRSA) (MIC=0.047 ug/ml). Has poor activity against Gram-negative bacteria, with the exception of B.fragilis. Inhibits bacterial protein biosynthesis by acting on elongation factor Tu (EF-Tu). Full antibiotic activity depends on the presence of the modified residue Ile-50. The protein is Thiocillin GE37468 (getA) of Streptomyces sp.